A 794-amino-acid chain; its full sequence is Copper amine oxidase-like protein cao2 (794 aa).

Residues 307 to 318 (AYDLGEYGVGYR) and 391 to 396 (AANYEY) each bind substrate. Aspartate 309 functions as the Proton acceptor in the catalytic mechanism. Tyrosine 394 acts as the Schiff-base intermediate with substrate; via topaquinone in catalysis. Tyrosine 394 bears the 2',4',5'-topaquinone mark. Residues histidine 445 and histidine 447 each coordinate Cu cation. The segment at 563 to 584 (GDYAPQASDDTPKGLSKWISDD) is disordered. The Mn(2+) site is built by aspartate 593 and isoleucine 594. Histidine 604 serves as a coordination point for Cu cation. The interval 634-748 (ALDTSSSVNS…NGGHHHHHHH (115 aa)) is disordered. Positions 637 to 649 (TSSSVNSTSEATS) are enriched in low complexity. A compositionally biased stretch (basic and acidic residues) spans 652 to 714 (THHENLRDTS…DAAQKHEGRS (63 aa)). Polar residues predominate over residues 716-727 (TLAQPGQQNANQ).

Belongs to the copper/topaquinone oxidase family. In terms of assembly, homodimer. The cofactor is Cu cation. Requires Zn(2+) as cofactor. It depends on L-topaquinone as a cofactor. Mn(2+) is required as a cofactor. Post-translationally, topaquinone (TPQ) is generated by copper-dependent autoxidation of a specific tyrosyl residue.

The protein localises to the cytoplasm. It catalyses the reaction a primary methyl amine + O2 + H2O = an aldehyde + H2O2 + NH4(+). Functionally, copper amine oxidase-like protein that does not show any copper amine oxidase activity. May be the appropriate amine substrate for cao2 has not been identified yet. The sequence is that of Copper amine oxidase-like protein cao2 (cao2) from Schizosaccharomyces pombe (strain 972 / ATCC 24843) (Fission yeast).